The chain runs to 451 residues: Methionine aminopeptidase 2-2 (451 aa).

The interval 1–101 (MAAKVADDVA…IDEVFPNDSY (101 aa)) is disordered. Over residues 37-51 (EHEDSDDDNEAEEGA) the composition is skewed to acidic residues. Basic residues predominate over residues 60-73 (KKKKKRKPRKKKKA). Residue His204 participates in substrate binding. 3 residues coordinate a divalent metal cation: Asp224, Asp235, and His304. His312 is a substrate binding site. Positions 337 and 432 each coordinate a divalent metal cation.

It belongs to the peptidase M24A family. Methionine aminopeptidase eukaryotic type 2 subfamily. Co(2+) is required as a cofactor. Zn(2+) serves as cofactor. It depends on Mn(2+) as a cofactor. The cofactor is Fe(2+).

It is found in the cytoplasm. The catalysed reaction is Release of N-terminal amino acids, preferentially methionine, from peptides and arylamides.. In terms of biological role, cotranslationally removes the N-terminal methionine from nascent proteins. The N-terminal methionine is often cleaved when the second residue in the primary sequence is small and uncharged (Met-Ala-, Cys, Gly, Pro, Ser, Thr, or Val). This Pyrenophora tritici-repentis (strain Pt-1C-BFP) (Wheat tan spot fungus) protein is Methionine aminopeptidase 2-2.